We begin with the raw amino-acid sequence, 122 residues long: Large ribosomal subunit protein uL14 (122 aa).

The protein belongs to the universal ribosomal protein uL14 family. Part of the 50S ribosomal subunit. Forms a cluster with proteins L3 and L19. In the 70S ribosome, L14 and L19 interact and together make contacts with the 16S rRNA in bridges B5 and B8.

Its function is as follows. Binds to 23S rRNA. Forms part of two intersubunit bridges in the 70S ribosome. The chain is Large ribosomal subunit protein uL14 from Kosmotoga olearia (strain ATCC BAA-1733 / DSM 21960 / TBF 19.5.1).